We begin with the raw amino-acid sequence, 84 residues long: Sec-independent protein translocase protein TatA (84 aa).

A helical membrane pass occupies residues 1–21 (MGGISIWQLLIVAVIVVLLFG). Basic and acidic residues-rich tracts occupy residues 42 to 55 (AMSDDDAKQDKTSQ) and 64 to 84 (IADKQGEAKKEDAKSQDKEQV). Residues 42-84 (AMSDDDAKQDKTSQDADFTAKSIADKQGEAKKEDAKSQDKEQV) are disordered.

It belongs to the TatA/E family. In terms of assembly, the Tat system comprises two distinct complexes: a TatABC complex, containing multiple copies of TatA, TatB and TatC subunits, and a separate TatA complex, containing only TatA subunits. Substrates initially bind to the TatABC complex, which probably triggers association of the separate TatA complex to form the active translocon.

The protein localises to the cell inner membrane. Its function is as follows. Part of the twin-arginine translocation (Tat) system that transports large folded proteins containing a characteristic twin-arginine motif in their signal peptide across membranes. TatA could form the protein-conducting channel of the Tat system. This is Sec-independent protein translocase protein TatA from Salmonella typhi.